The primary structure comprises 440 residues: UDP-N-acetylmuramoylalanine--D-glutamate ligase (440 aa).

115–121 (GSNGKST) contacts ATP.

Belongs to the MurCDEF family.

Its subcellular location is the cytoplasm. It catalyses the reaction UDP-N-acetyl-alpha-D-muramoyl-L-alanine + D-glutamate + ATP = UDP-N-acetyl-alpha-D-muramoyl-L-alanyl-D-glutamate + ADP + phosphate + H(+). The protein operates within cell wall biogenesis; peptidoglycan biosynthesis. Its function is as follows. Cell wall formation. Catalyzes the addition of glutamate to the nucleotide precursor UDP-N-acetylmuramoyl-L-alanine (UMA). This chain is UDP-N-acetylmuramoylalanine--D-glutamate ligase, found in Aliivibrio fischeri (strain MJ11) (Vibrio fischeri).